A 268-amino-acid polypeptide reads, in one-letter code: 4-hydroxy-tetrahydrodipicolinate reductase (268 aa).

NAD(+)-binding positions include 9 to 14 (GAAGRM), 99 to 101 (GTT), and 123 to 126 (ASNF). The active-site Proton donor/acceptor is H156. H157 contributes to the (S)-2,3,4,5-tetrahydrodipicolinate binding site. K160 acts as the Proton donor in catalysis. 166–167 (GT) is a (S)-2,3,4,5-tetrahydrodipicolinate binding site.

This sequence belongs to the DapB family.

It is found in the cytoplasm. It carries out the reaction (S)-2,3,4,5-tetrahydrodipicolinate + NAD(+) + H2O = (2S,4S)-4-hydroxy-2,3,4,5-tetrahydrodipicolinate + NADH + H(+). It catalyses the reaction (S)-2,3,4,5-tetrahydrodipicolinate + NADP(+) + H2O = (2S,4S)-4-hydroxy-2,3,4,5-tetrahydrodipicolinate + NADPH + H(+). It participates in amino-acid biosynthesis; L-lysine biosynthesis via DAP pathway; (S)-tetrahydrodipicolinate from L-aspartate: step 4/4. Its function is as follows. Catalyzes the conversion of 4-hydroxy-tetrahydrodipicolinate (HTPA) to tetrahydrodipicolinate. This chain is 4-hydroxy-tetrahydrodipicolinate reductase, found in Saccharophagus degradans (strain 2-40 / ATCC 43961 / DSM 17024).